Consider the following 1057-residue polypeptide: Carbamoyl phosphate synthase large chain (1057 aa).

Residues 1-401 (MPKRDDIQTI…SLLKAIRSLE (401 aa)) are carboxyphosphate synthetic domain. ATP-binding residues include Arg-129, Arg-169, Gly-175, Gly-176, Lys-208, Ile-210, Glu-215, Gly-241, Ile-242, His-243, Gln-284, and Glu-298. The region spanning 133–327 (RTLMNDLNVP…IAKLAAKIAV (195 aa)) is the ATP-grasp 1 domain. Residues Gln-284, Glu-298, and Asn-300 each contribute to the Mg(2+) site. Mn(2+) contacts are provided by Gln-284, Glu-298, and Asn-300. The segment at 402 to 546 (YGVHHLGLPN…YGTYEDENES (145 aa)) is oligomerization domain. Positions 547-929 (IVTDKEKILV…ALYKGLTGSG (383 aa)) are carbamoyl phosphate synthetic domain. The region spanning 671–861 (EALLREISVP…MAQLAMRAIM (191 aa)) is the ATP-grasp 2 domain. Residues Arg-707, Arg-746, Leu-748, Glu-752, Gly-777, Val-778, His-779, Ser-780, Gln-820, and Glu-832 each coordinate ATP. Residues Gln-820, Glu-832, and Asn-834 each contribute to the Mg(2+) site. Mn(2+)-binding residues include Gln-820, Glu-832, and Asn-834. Residues 930 to 1057 (FEVKDHGTVL…ESMTFTMRNV (128 aa)) enclose the MGS-like domain. Residues 930-1057 (FEVKDHGTVL…ESMTFTMRNV (128 aa)) are allosteric domain.

It belongs to the CarB family. Composed of two chains; the small (or glutamine) chain promotes the hydrolysis of glutamine to ammonia, which is used by the large (or ammonia) chain to synthesize carbamoyl phosphate. Tetramer of heterodimers (alpha,beta)4. Mg(2+) is required as a cofactor. Mn(2+) serves as cofactor.

The enzyme catalyses hydrogencarbonate + L-glutamine + 2 ATP + H2O = carbamoyl phosphate + L-glutamate + 2 ADP + phosphate + 2 H(+). It catalyses the reaction hydrogencarbonate + NH4(+) + 2 ATP = carbamoyl phosphate + 2 ADP + phosphate + 2 H(+). Its pathway is amino-acid biosynthesis; L-arginine biosynthesis; carbamoyl phosphate from bicarbonate: step 1/1. It functions in the pathway pyrimidine metabolism; UMP biosynthesis via de novo pathway; (S)-dihydroorotate from bicarbonate: step 1/3. In terms of biological role, large subunit of the glutamine-dependent carbamoyl phosphate synthetase (CPSase). CPSase catalyzes the formation of carbamoyl phosphate from the ammonia moiety of glutamine, carbonate, and phosphate donated by ATP, constituting the first step of 2 biosynthetic pathways, one leading to arginine and/or urea and the other to pyrimidine nucleotides. The large subunit (synthetase) binds the substrates ammonia (free or transferred from glutamine from the small subunit), hydrogencarbonate and ATP and carries out an ATP-coupled ligase reaction, activating hydrogencarbonate by forming carboxy phosphate which reacts with ammonia to form carbamoyl phosphate. The sequence is that of Carbamoyl phosphate synthase large chain from Staphylococcus epidermidis (strain ATCC 35984 / DSM 28319 / BCRC 17069 / CCUG 31568 / BM 3577 / RP62A).